The following is a 990-amino-acid chain: DNA polymerase (990 aa).

Residues 936–976 (PSDDAARKRARAGPSALRKQKAASNDEDSSDEDDEDCSQAI) form a disordered region. Positions 960 to 972 (NDEDSSDEDDEDC) are enriched in acidic residues.

The protein belongs to the DNA polymerase type-B family.

The catalysed reaction is DNA(n) + a 2'-deoxyribonucleoside 5'-triphosphate = DNA(n+1) + diphosphate. Functionally, replicates the viral genome, host DNA polymerases cannot substitute for the viral enzyme in this process. The protein is DNA polymerase (POL) of Choristoneura fumiferana (Spruce budworm moth).